The chain runs to 276 residues: NH(3)-dependent NAD(+) synthetase (276 aa).

43–50 (GISGGVDS) lines the ATP pocket. Position 49 (Asp-49) interacts with Mg(2+). Arg-146 is a binding site for deamido-NAD(+). Residue Thr-166 participates in ATP binding. Glu-171 provides a ligand contact to Mg(2+). Lys-179 and Asp-186 together coordinate deamido-NAD(+). ATP-binding residues include Lys-195 and Thr-217. 266–267 (HK) is a deamido-NAD(+) binding site.

It belongs to the NAD synthetase family. Homodimer.

The catalysed reaction is deamido-NAD(+) + NH4(+) + ATP = AMP + diphosphate + NAD(+) + H(+). It participates in cofactor biosynthesis; NAD(+) biosynthesis; NAD(+) from deamido-NAD(+) (ammonia route): step 1/1. In terms of biological role, catalyzes the ATP-dependent amidation of deamido-NAD to form NAD. Uses ammonia as a nitrogen source. The chain is NH(3)-dependent NAD(+) synthetase from Shewanella pealeana (strain ATCC 700345 / ANG-SQ1).